The chain runs to 301 residues: Inosose dehydratase (301 aa).

The protein belongs to the IolE/MocC family. The cofactor is glutathione. Co(2+) is required as a cofactor. It depends on Mn(2+) as a cofactor.

It carries out the reaction scyllo-inosose = 3D-3,5/4-trihydroxycyclohexane-1,2-dione + H2O. Its pathway is polyol metabolism; myo-inositol degradation into acetyl-CoA; acetyl-CoA from myo-inositol: step 2/7. In terms of biological role, catalyzes the dehydration of inosose (2-keto-myo-inositol, 2KMI or 2,4,6/3,5-pentahydroxycyclohexanone) to 3D-(3,5/4)-trihydroxycyclohexane-1,2-dione (D-2,3-diketo-4-deoxy-epi-inositol). This is Inosose dehydratase from Lacticaseibacillus casei (strain BL23) (Lactobacillus casei).